A 122-amino-acid chain; its full sequence is Large ribosomal subunit protein uL14 (122 aa).

It belongs to the universal ribosomal protein uL14 family. Part of the 50S ribosomal subunit. Forms a cluster with proteins L3 and L19. In the 70S ribosome, L14 and L19 interact and together make contacts with the 16S rRNA in bridges B5 and B8.

Functionally, binds to 23S rRNA. Forms part of two intersubunit bridges in the 70S ribosome. This chain is Large ribosomal subunit protein uL14, found in Baumannia cicadellinicola subsp. Homalodisca coagulata.